A 257-amino-acid chain; its full sequence is Transmembrane protein 101 (257 aa).

The next 8 helical transmembrane spans lie at T24 to E40, V52 to G72, W77 to G97, Y110 to L130, S139 to L159, L182 to L202, I206 to H226, and F233 to L253.

The protein resides in the membrane. May activate NF-kappa-B signaling pathways. This Mus musculus (Mouse) protein is Transmembrane protein 101 (Tmem101).